A 72-amino-acid chain; its full sequence is Large ribosomal subunit protein bL31 (72 aa).

Zn(2+) contacts are provided by cysteine 17, cysteine 19, cysteine 37, and cysteine 40.

The protein belongs to the bacterial ribosomal protein bL31 family. Type A subfamily. Part of the 50S ribosomal subunit. Zn(2+) is required as a cofactor.

Functionally, binds the 23S rRNA. The sequence is that of Large ribosomal subunit protein bL31 from Clostridium botulinum (strain Loch Maree / Type A3).